Reading from the N-terminus, the 608-residue chain is Tyrosyl-DNA phosphodiesterase 1 (608 aa).

Positions 1–101 (MSQEGDYGRW…SDDELQPEMP (101 aa)) are disordered. Residue S61 is modified to Phosphoserine. T147 carries the phosphothreonine modification. Residue S148 is modified to Phosphoserine. The Nucleophile role is filled by H263. A substrate-binding site is contributed by K265. An interaction with DNA region spans residues 400–403 (SVGS). H493 (proton donor/acceptor) is an active-site residue. K495 is a substrate binding site.

Belongs to the tyrosyl-DNA phosphodiesterase family. Monomer. Phosphorylated on serine and/or threonine residues, but not on tyrosine residues. As to expression, ubiquitously expressed. Similar expression throughout the central nervous system (whole brain, amygdala, caudate nucleus, cerebellum, cerebral cortex, frontal lobe, hippocampus, medulla oblongata, occipital lobe, putamen, substantia nigra, temporal lobe, thalamus, nucleus accumbens and spinal cord) and increased expression in testis and thymus.

It localises to the nucleus. Its subcellular location is the cytoplasm. In terms of biological role, DNA repair enzyme that can remove a variety of covalent adducts from DNA through hydrolysis of a 3'-phosphodiester bond, giving rise to DNA with a free 3' phosphate. Catalyzes the hydrolysis of dead-end complexes between DNA and the topoisomerase I active site tyrosine residue. Hydrolyzes 3'-phosphoglycolates on protruding 3' ends on DNA double-strand breaks due to DNA damage by radiation and free radicals. Acts on blunt-ended double-strand DNA breaks and on single-stranded DNA. Has low 3'exonuclease activity and can remove a single nucleoside from the 3'end of DNA and RNA molecules with 3'hydroxyl groups. Has no exonuclease activity towards DNA or RNA with a 3'phosphate. The polypeptide is Tyrosyl-DNA phosphodiesterase 1 (TDP1) (Homo sapiens (Human)).